Reading from the N-terminus, the 624-residue chain is DNA mismatch repair protein MutL (624 aa).

The tract at residues 360–396 is disordered; sequence GGNHFSQPAPRRETASTEPAVARERAPQPAYHSGSGY. Residues 369 to 385 are compositionally biased toward basic and acidic residues; sequence PRRETASTEPAVARERA.

This sequence belongs to the DNA mismatch repair MutL/HexB family.

This protein is involved in the repair of mismatches in DNA. It is required for dam-dependent methyl-directed DNA mismatch repair. May act as a 'molecular matchmaker', a protein that promotes the formation of a stable complex between two or more DNA-binding proteins in an ATP-dependent manner without itself being part of a final effector complex. The sequence is that of DNA mismatch repair protein MutL from Serratia proteamaculans (strain 568).